The sequence spans 217 residues: Dual specificity phosphatase 29 (217 aa).

The Tyrosine-protein phosphatase domain occupies 46–194; that stretch reads HVNEVWPNLY…LRELDIKLAL (149 aa). 138-145 lines the substrate pocket; that stretch reads HCAMGRSR. Cys139 acts as the Phosphocysteine intermediate in catalysis.

This sequence belongs to the protein-tyrosine phosphatase family. Non-receptor class dual specificity subfamily.

The protein localises to the cytoplasm. Its subcellular location is the nucleus. It carries out the reaction O-phospho-L-tyrosyl-[protein] + H2O = L-tyrosyl-[protein] + phosphate. The enzyme catalyses O-phospho-L-seryl-[protein] + H2O = L-seryl-[protein] + phosphate. It catalyses the reaction O-phospho-L-threonyl-[protein] + H2O = L-threonyl-[protein] + phosphate. Dual specificity phosphatase able to dephosphorylate phosphotyrosine, phosphoserine and phosphothreonine residues within the same substrate, with a preference for phosphotyrosine as a substrate. Involved in the modulation of AMPK and MAPK1/2 signaling pathways. This Anolis carolinensis (Green anole) protein is Dual specificity phosphatase 29 (DUSP29).